The following is a 230-amino-acid chain: 5'-methylthioadenosine/S-adenosylhomocysteine nucleosidase (230 aa).

Residue E12 is the Proton acceptor of the active site. Residues G78, I153, and M174 to E175 each bind substrate. Catalysis depends on D198, which acts as the Proton donor.

This sequence belongs to the PNP/UDP phosphorylase family. MtnN subfamily.

The catalysed reaction is S-adenosyl-L-homocysteine + H2O = S-(5-deoxy-D-ribos-5-yl)-L-homocysteine + adenine. The enzyme catalyses S-methyl-5'-thioadenosine + H2O = 5-(methylsulfanyl)-D-ribose + adenine. It carries out the reaction 5'-deoxyadenosine + H2O = 5-deoxy-D-ribose + adenine. It functions in the pathway amino-acid biosynthesis; L-methionine biosynthesis via salvage pathway; S-methyl-5-thio-alpha-D-ribose 1-phosphate from S-methyl-5'-thioadenosine (hydrolase route): step 1/2. Its function is as follows. Catalyzes the irreversible cleavage of the glycosidic bond in both 5'-methylthioadenosine (MTA) and S-adenosylhomocysteine (SAH/AdoHcy) to adenine and the corresponding thioribose, 5'-methylthioribose and S-ribosylhomocysteine, respectively. Also cleaves 5'-deoxyadenosine, a toxic by-product of radical S-adenosylmethionine (SAM) enzymes, into 5-deoxyribose and adenine. In Shewanella pealeana (strain ATCC 700345 / ANG-SQ1), this protein is 5'-methylthioadenosine/S-adenosylhomocysteine nucleosidase.